The primary structure comprises 213 residues: Calcium-dependent cell adhesion molecule 1 (213 aa).

A run of 4 repeats spans residues 1-48, 49-97, 98-146, and 147-194. Positions 1-194 are 4 X approximate tandem repeats; sequence MSVDANKVKF…IKKDETFPKN (194 aa).

It belongs to the Dictyostelium CAD family. In terms of processing, the N-terminus is blocked.

It localises to the cell membrane. Its function is as follows. Mediates calcium-dependent cell-cell adhesion during the early stage of development. This Dictyostelium discoideum (Social amoeba) protein is Calcium-dependent cell adhesion molecule 1 (cadA).